A 115-amino-acid chain; its full sequence is MSNNIIKAIESEQLKQDLPEFCPGDTVQVQVRVKEGTRERLQAFEGVVIAKRNRGLNSSFTVRKISHGEGVERVFQTHSPTLESILVKRRGDVRRAKLYYLRERRGKAARIKEKI.

This sequence belongs to the bacterial ribosomal protein bL19 family.

Its function is as follows. This protein is located at the 30S-50S ribosomal subunit interface and may play a role in the structure and function of the aminoacyl-tRNA binding site. This chain is Large ribosomal subunit protein bL19, found in Nitrosococcus oceani (strain ATCC 19707 / BCRC 17464 / JCM 30415 / NCIMB 11848 / C-107).